Consider the following 538-residue polypeptide: Ubiquitin domain-containing protein DSK2a (538 aa).

A Ubiquitin-like domain is found at 18–93 (VAVNVRCSNG…VHMVRGFVPS (76 aa)). The segment at 95-120 (PSAPAANAGNQTTAPQAVGSNDSSNL) is disordered. A compositionally biased stretch (polar residues) spans 102-119 (AGNQTTAPQAVGSNDSSN). 2 STI1 domains span residues 138 to 179 (GNAM…QNLM) and 192 to 231 (NPQM…MREM). The segment at 289 to 316 (QGVTTQGSDTSNNISAPNAETGTPNANP) is disordered. 2 consecutive STI1 domains span residues 357 to 394 (SPLG…MNQL) and 398 to 433 (NPQL…MQQM). One can recognise a UBA domain in the interval 491–535 (PPEERFATQLQQLQEMGFYDRAENIRALLATNGNVNAAVERLLGS).

In terms of assembly, interacts with 'Lys-48'-linked polyubiquitin chains via its UBA domain. Interacts with RPN10 and RPN13. Interacts with PEX2 and PEX12. As to expression, ubiquitous with a strong expression level in inflorescence.

Its subcellular location is the nucleus. The protein resides in the cytoplasm. In terms of biological role, binds and presumably selects ubiquitin-conjugates for destruction. Prefers multiubiquitin chains rather than single ubiquitins, with a binding affinity for 'Lys-48'-linked ubiquitin chains. Acts as a ubiquitin receptor that associates with the 26S proteasomal docking subunit RPN10 for the indirect recognition of ubiquitinated substrates of ubiquitin/26S proteasome-mediated proteolysis (UPP). The sequence is that of Ubiquitin domain-containing protein DSK2a (DSK2A) from Arabidopsis thaliana (Mouse-ear cress).